The sequence spans 441 residues: Maltose-6'-phosphate glucosidase MalH (441 aa).

Position 4 to 70 (4 to 70) interacts with NAD(+); that stretch reads FSVVIAGGGS…PEIEFLATTN (67 aa). The substrate site is built by Arg93 and Asn147. Cys169 is a binding site for Mn(2+). Asp170 (proton donor) is an active-site residue. A Mn(2+)-binding site is contributed by His200. The active-site Proton acceptor is Tyr264. Residue Arg284 coordinates substrate.

As to quaternary structure, homotetramer. NAD(+) serves as cofactor. Mn(2+) is required as a cofactor.

The enzyme catalyses alpha-maltose 6'-phosphate + H2O = D-glucose 6-phosphate + D-glucose. In terms of biological role, catalyzes the hydrolysis of O-alpha-linked disaccharide 6-phosphates, including maltose-6'P and all five phosphorylated isomers of sucrose, but not sucrose-6P. Does not hydrolyze beta-linked disaccharide 6-phosphates such as cellobiose-6'P and gentiobiose-6'P. Is involved in the dissimilation of maltose and related O-alpha-linked glucosides produced via the phosphoenolpyruvate-dependent sugar phosphotransferase system (PEP-PTS). The sequence is that of Maltose-6'-phosphate glucosidase MalH (malH) from Clostridium acetobutylicum (strain ATCC 824 / DSM 792 / JCM 1419 / IAM 19013 / LMG 5710 / NBRC 13948 / NRRL B-527 / VKM B-1787 / 2291 / W).